A 954-amino-acid chain; its full sequence is Glycine dehydrogenase (decarboxylating) (954 aa).

Lys704 carries the post-translational modification N6-(pyridoxal phosphate)lysine.

It belongs to the GcvP family. As to quaternary structure, the glycine cleavage system is composed of four proteins: P, T, L and H. It depends on pyridoxal 5'-phosphate as a cofactor.

The catalysed reaction is N(6)-[(R)-lipoyl]-L-lysyl-[glycine-cleavage complex H protein] + glycine + H(+) = N(6)-[(R)-S(8)-aminomethyldihydrolipoyl]-L-lysyl-[glycine-cleavage complex H protein] + CO2. Functionally, the glycine cleavage system catalyzes the degradation of glycine. The P protein binds the alpha-amino group of glycine through its pyridoxal phosphate cofactor; CO(2) is released and the remaining methylamine moiety is then transferred to the lipoamide cofactor of the H protein. This Sinorhizobium medicae (strain WSM419) (Ensifer medicae) protein is Glycine dehydrogenase (decarboxylating).